The following is a 201-amino-acid chain: UPF0301 protein Smed_0532 (201 aa).

Belongs to the UPF0301 (AlgH) family.

The polypeptide is UPF0301 protein Smed_0532 (Sinorhizobium medicae (strain WSM419) (Ensifer medicae)).